A 163-amino-acid chain; its full sequence is SsrA-binding protein (163 aa).

Residues 140 to 157 (RRGAIAERESKREMDRAL) show a composition bias toward basic and acidic residues. The tract at residues 140 to 163 (RRGAIAERESKREMDRALARGRRR) is disordered.

This sequence belongs to the SmpB family.

It is found in the cytoplasm. Its function is as follows. Required for rescue of stalled ribosomes mediated by trans-translation. Binds to transfer-messenger RNA (tmRNA), required for stable association of tmRNA with ribosomes. tmRNA and SmpB together mimic tRNA shape, replacing the anticodon stem-loop with SmpB. tmRNA is encoded by the ssrA gene; the 2 termini fold to resemble tRNA(Ala) and it encodes a 'tag peptide', a short internal open reading frame. During trans-translation Ala-aminoacylated tmRNA acts like a tRNA, entering the A-site of stalled ribosomes, displacing the stalled mRNA. The ribosome then switches to translate the ORF on the tmRNA; the nascent peptide is terminated with the 'tag peptide' encoded by the tmRNA and targeted for degradation. The ribosome is freed to recommence translation, which seems to be the essential function of trans-translation. The polypeptide is SsrA-binding protein (Anaeromyxobacter dehalogenans (strain 2CP-C)).